A 224-amino-acid chain; its full sequence is Phosphoribosylformylglycinamidine synthase subunit PurQ (224 aa).

A Glutamine amidotransferase type-1 domain is found at 4 to 224 (RIGIITFPGT…YSVLDGVLAG (221 aa)). Cys-87 functions as the Nucleophile in the catalytic mechanism. Active-site residues include His-195 and Glu-197.

In terms of assembly, part of the FGAM synthase complex composed of 1 PurL, 1 PurQ and 2 PurS subunits.

It localises to the cytoplasm. The enzyme catalyses N(2)-formyl-N(1)-(5-phospho-beta-D-ribosyl)glycinamide + L-glutamine + ATP + H2O = 2-formamido-N(1)-(5-O-phospho-beta-D-ribosyl)acetamidine + L-glutamate + ADP + phosphate + H(+). It carries out the reaction L-glutamine + H2O = L-glutamate + NH4(+). It functions in the pathway purine metabolism; IMP biosynthesis via de novo pathway; 5-amino-1-(5-phospho-D-ribosyl)imidazole from N(2)-formyl-N(1)-(5-phospho-D-ribosyl)glycinamide: step 1/2. In terms of biological role, part of the phosphoribosylformylglycinamidine synthase complex involved in the purines biosynthetic pathway. Catalyzes the ATP-dependent conversion of formylglycinamide ribonucleotide (FGAR) and glutamine to yield formylglycinamidine ribonucleotide (FGAM) and glutamate. The FGAM synthase complex is composed of three subunits. PurQ produces an ammonia molecule by converting glutamine to glutamate. PurL transfers the ammonia molecule to FGAR to form FGAM in an ATP-dependent manner. PurS interacts with PurQ and PurL and is thought to assist in the transfer of the ammonia molecule from PurQ to PurL. The protein is Phosphoribosylformylglycinamidine synthase subunit PurQ of Mycolicibacterium paratuberculosis (strain ATCC BAA-968 / K-10) (Mycobacterium paratuberculosis).